We begin with the raw amino-acid sequence, 149 residues long: Nucleoside diphosphate kinase (149 aa).

ATP is bound by residues Lys-9, Phe-57, Arg-85, Thr-91, Arg-102, and Asn-112. Residue His-115 is the Pros-phosphohistidine intermediate of the active site.

The protein belongs to the NDK family. Homotetramer. The cofactor is Mg(2+).

It localises to the cytoplasm. The enzyme catalyses a 2'-deoxyribonucleoside 5'-diphosphate + ATP = a 2'-deoxyribonucleoside 5'-triphosphate + ADP. It catalyses the reaction a ribonucleoside 5'-diphosphate + ATP = a ribonucleoside 5'-triphosphate + ADP. Major role in the synthesis of nucleoside triphosphates other than ATP. The ATP gamma phosphate is transferred to the NDP beta phosphate via a ping-pong mechanism, using a phosphorylated active-site intermediate. The polypeptide is Nucleoside diphosphate kinase (Desulfitobacterium hafniense (strain DSM 10664 / DCB-2)).